Reading from the N-terminus, the 238-residue chain is Large ribosomal subunit protein uL3 (238 aa).

The protein belongs to the universal ribosomal protein uL3 family. In terms of assembly, part of the 50S ribosomal subunit. Forms a cluster with proteins L14 and L19.

Functionally, one of the primary rRNA binding proteins, it binds directly near the 3'-end of the 23S rRNA, where it nucleates assembly of the 50S subunit. This chain is Large ribosomal subunit protein uL3, found in Mesoplasma florum (strain ATCC 33453 / NBRC 100688 / NCTC 11704 / L1) (Acholeplasma florum).